The following is an 89-amino-acid chain: Small ribosomal subunit protein bS20 (89 aa).

The protein belongs to the bacterial ribosomal protein bS20 family.

Functionally, binds directly to 16S ribosomal RNA. The protein is Small ribosomal subunit protein bS20 of Xanthobacter autotrophicus (strain ATCC BAA-1158 / Py2).